A 432-amino-acid polypeptide reads, in one-letter code: Protein arginine N-methyltransferase 2 (432 aa).

The span at 1–11 (MESSSECSSIS) shows a compositional bias: low complexity. The tract at residues 1–22 (MESSSECSSISDFQDSTEGDDA) is disordered. In terms of domain architecture, SH3 spans 29 to 88 (LCMREYVVICDYVATDNTQLSLCSGDKVLLLNAVSQDWWWVNHNGTCGYVPASHLHDALN). Residues 101–405 (DEEYYGSYKT…FERNSVWRRH (305 aa)) form the SAM-dependent MTase PRMT-type domain. 5 residues coordinate S-adenosyl-L-methionine: His114, Arg123, Gly147, Glu170, and Glu199. Catalysis depends on residues Glu213 and Glu222.

The protein belongs to the class I-like SAM-binding methyltransferase superfamily. Protein arginine N-methyltransferase family. Interacts with ctnnb1.

It is found in the cytoplasm. It localises to the nucleus. It catalyses the reaction L-arginyl-[protein] + 2 S-adenosyl-L-methionine = N(omega),N(omega)-dimethyl-L-arginyl-[protein] + 2 S-adenosyl-L-homocysteine + 2 H(+). Its function is as follows. Arginine methyltransferase that methylates the guanidino nitrogens of arginyl residues in proteins such as histones. Involved in growth regulation. Involved in embryonic dorsal development. This Xenopus laevis (African clawed frog) protein is Protein arginine N-methyltransferase 2 (prmt2).